We begin with the raw amino-acid sequence, 643 residues long: 1-deoxy-D-xylulose-5-phosphate synthase (643 aa).

Residues His89 and 130 to 132 (GHS) each bind thiamine diphosphate. Asp161 provides a ligand contact to Mg(2+). Thiamine diphosphate contacts are provided by residues 162-163 (GA), Asn190, Phe297, and Glu380. Mg(2+) is bound at residue Asn190.

Belongs to the transketolase family. DXPS subfamily. As to quaternary structure, homodimer. Mg(2+) is required as a cofactor. Requires thiamine diphosphate as cofactor.

It carries out the reaction D-glyceraldehyde 3-phosphate + pyruvate + H(+) = 1-deoxy-D-xylulose 5-phosphate + CO2. It participates in metabolic intermediate biosynthesis; 1-deoxy-D-xylulose 5-phosphate biosynthesis; 1-deoxy-D-xylulose 5-phosphate from D-glyceraldehyde 3-phosphate and pyruvate: step 1/1. In terms of biological role, catalyzes the acyloin condensation reaction between C atoms 2 and 3 of pyruvate and glyceraldehyde 3-phosphate to yield 1-deoxy-D-xylulose-5-phosphate (DXP). The chain is 1-deoxy-D-xylulose-5-phosphate synthase from Hahella chejuensis (strain KCTC 2396).